Here is a 254-residue protein sequence, read N- to C-terminus: Uracil-DNA glycosylase (254 aa).

Asp-91 acts as the Proton acceptor in catalysis.

Belongs to the uracil-DNA glycosylase (UDG) superfamily. UNG family.

It localises to the host nucleus. It carries out the reaction Hydrolyzes single-stranded DNA or mismatched double-stranded DNA and polynucleotides, releasing free uracil.. Excises uracil residues from the DNA which can arise as a result of misincorporation of dUMP residues by DNA polymerase or deamination of cytosines. Therefore may reduce deleterious uracil incorporation into the viral genome, particularly in terminally differentiated cells which lack DNA repair enzymes. This is Uracil-DNA glycosylase (U81) from Homo sapiens (Human).